The chain runs to 188 residues: COMM domain-containing protein 1 (188 aa).

The sufficient for interaction with SLC12A2 stretch occupies residues 1-122; the sequence is MAAELEGSKA…RWDSGLRGLS (122 aa). Cu cation-binding residues include histidine 100, methionine 109, and histidine 133. One can recognise a COMM domain in the interval 117–185; sequence GLRGLSWRVD…EVEESISTLM (69 aa). Residues 124-188 form a required for binding to PtdIns(4,5)P2 region; the sequence is RVDGKSQSRH…ESISTLMQPA (65 aa).

The protein belongs to the COMM domain-containing protein 1 family. Component of the commander complex consisting of the CCC subcomplex and the retriever subcomplex. Component of the CCC (COMMD/CCDC22/CCDC93) subcomplex consisting of COMMD1, COMMD2, COMMD3, COMMD4, COMMD5, COMMD6, COMMD7, COMMD8, COMMD9, COMMD10, CCDC22 and CCDC93; within the complex forms a heterodimer with COMMD6. Interacts with VPS35L; the interaction associates the CCC complex with the retriever complex. Identified in a complex with an E3 ubiquitin ligase complex composed of TCEB1/elongin C, CUL2, SOCS1 and RBX1; in the complex interacts directly with SOCS1 and CUL2. Identified in a complex with NF-kappa-B. Interacts directly with SLC12A2. Interacts directly with ATP7B (via the N-terminal region). Interacts with ATP7A. Interacts with FAM107A; this interaction stabilizes COMMD1 in the nucleus. Interacts with CCS, CDKN2A, RELA, REL, RELB, NFKB1/p105, NFKB2/p100, NFKBIB, SCNN1D, SCNN1B, CFTR, CLU, SGK1, AKT1, CUL1, CUL2, CUL3, CUL4A, CUL4B, CUL5, CUL7, HIF1A. Post-translationally, ubiquitinated; undergoes both 'Lys-63'- and 'Lys-48'-linked polyubiquitination. Ubiquitinated by XIAP, leading to its proteasomal degradation.

It localises to the nucleus. It is found in the cytoplasm. The protein localises to the endosome membrane. The protein resides in the cytoplasmic vesicle. Its subcellular location is the early endosome. It localises to the recycling endosome. Functionally, scaffold protein in the commander complex that is essential for endosomal recycling of transmembrane cargos; the commander complex is composed of the CCC subcomplex and the retriever subcomplex. Can modulate activity of cullin-RING E3 ubiquitin ligase (CRL) complexes by displacing CAND1; in vitro promotes CRL E3 activity and dissociates CAND1 from CUL1 and CUL2. Promotes ubiquitination of NF-kappa-B subunit RELA and its subsequent proteasomal degradation. Down-regulates NF-kappa-B activity. Involved in the regulation of membrane expression and ubiquitination of SLC12A2. Modulates Na(+) transport in epithelial cells by regulation of apical cell surface expression of amiloride-sensitive sodium channel (ENaC) subunits and by promoting their ubiquitination presumably involving NEDD4L. Promotes the localization of SCNN1D to recycling endosomes. Promotes CFTR cell surface expression through regulation of its ubiquitination. Down-regulates SOD1 activity by interfering with its homodimerization. Plays a role in copper ion homeostasis. Involved in copper-dependent ATP7A trafficking between the trans-Golgi network and vesicles in the cell periphery; the function is proposed to depend on its association within the CCC complex and cooperation with the WASH complex on early endosomes. Can bind one copper ion per monomer. May function to facilitate biliary copper excretion within hepatocytes. Binds to phosphatidylinositol 4,5-bisphosphate (PtdIns(4,5)P2). Involved in the regulation of HIF1A-mediated transcription; competes with ARNT/Hif-1-beta for binding to HIF1A resulting in decreased DNA binding and impaired transcriptional activation by HIF-1. Negatively regulates neuroblastoma G1/S phase cell cycle progression and cell proliferation by stimulating ubiquitination of NF-kappa-B subunit RELA and NF-kappa-B degradation in a FAM107A- and actin-dependent manner. The sequence is that of COMM domain-containing protein 1 (COMMD1) from Canis lupus familiaris (Dog).